The chain runs to 448 residues: Phosphoglucosamine mutase (448 aa).

S100 (phosphoserine intermediate) is an active-site residue. Mg(2+) contacts are provided by S100, D240, D242, and D244. Residue S100 is modified to Phosphoserine.

Belongs to the phosphohexose mutase family. The cofactor is Mg(2+). Post-translationally, activated by phosphorylation.

It carries out the reaction alpha-D-glucosamine 1-phosphate = D-glucosamine 6-phosphate. Catalyzes the conversion of glucosamine-6-phosphate to glucosamine-1-phosphate. The polypeptide is Phosphoglucosamine mutase (Clostridium tetani (strain Massachusetts / E88)).